The chain runs to 91 residues: Large ribosomal subunit protein bL27 (91 aa).

It belongs to the bacterial ribosomal protein bL27 family.

The sequence is that of Large ribosomal subunit protein bL27 from Deinococcus deserti (strain DSM 17065 / CIP 109153 / LMG 22923 / VCD115).